The following is a 451-amino-acid chain: MIDSEALESERVKLKRDIADLRANLNRKEQCLRELEAAIAAGEDSDEAEESSNDMPTPQTKLTNDDIARYSRQLILQDFGVQGQLKLKNSSVLIVGMGGLGCPAAQYLVAAGCGHLGLIDYDEVERSNLHRQILHSEHRCGMSKAESARIALLELNSHCQIRCHSRLINSMNAMHIIRPYDVVLDCSDNVATRYLLNDACVMLRKPLVSGSALKMDGQLTVYGYGQGPCYRCIYPVPPPPEAVTNCGDGGVLGAVTGIIGAMQALEAIKLIIGLGDVMSGRLLIFDGSSFMFRNIRIRTKRPNCHVCSAQPLITELIDYEMFCGMHATDKDNPLDLLEPDQRLEVKEYHQKLQSQPHLLLDVRPPAEFEICQLPRSINVPLSEILDDSYLKRFAKQLEDKELPIVLLCRRGNDSQIAVQHITNRFPAHSIRDLVGGLHAWTGSVDATFPIY.

Positions 42–62 are disordered; the sequence is GEDSDEAEESSNDMPTPQTKL. Over residues 43 to 52 the composition is skewed to acidic residues; sequence EDSDEAEESS. The residue at position 60 (Thr-60) is a Phosphothreonine. ATP is bound by residues Gly-99, Asp-120, 127 to 131, Lys-144, and 188 to 189; these read SNLHR and DN. Cys-229 and Cys-232 together coordinate Zn(2+). The active-site Glycyl thioester intermediate; for adenylyltransferase activity is Cys-246. Cys-304 and Cys-307 together coordinate Zn(2+). The Rhodanese domain maps to 353 to 449; that stretch reads QSQPHLLLDV…WTGSVDATFP (97 aa). The active-site Cysteine persulfide intermediate; for sulfurtransferase activity is the Cys-408.

This sequence in the N-terminal section; belongs to the HesA/MoeB/ThiF family. UBA4 subfamily. Zn(2+) serves as cofactor.

Its subcellular location is the cytoplasm. It carries out the reaction [molybdopterin-synthase sulfur-carrier protein]-C-terminal Gly-Gly + ATP + H(+) = [molybdopterin-synthase sulfur-carrier protein]-C-terminal Gly-Gly-AMP + diphosphate. It catalyses the reaction [molybdopterin-synthase sulfur-carrier protein]-C-terminal Gly-Gly-AMP + S-sulfanyl-L-cysteinyl-[cysteine desulfurase] + AH2 = [molybdopterin-synthase sulfur-carrier protein]-C-terminal-Gly-aminoethanethioate + L-cysteinyl-[cysteine desulfurase] + A + AMP + 2 H(+). The protein operates within tRNA modification; 5-methoxycarbonylmethyl-2-thiouridine-tRNA biosynthesis. It participates in cofactor biosynthesis; molybdopterin biosynthesis. Plays a central role in 2-thiolation of mcm(5)S(2)U at tRNA wobble positions of cytosolic tRNA(Lys), tRNA(Glu) and tRNA(Gln). Also essential during biosynthesis of the molybdenum cofactor. Acts by mediating the C-terminal thiocarboxylation of sulfur carriers URM1 and MOCS2A. Its N-terminus first activates URM1 and MOCS2A as acyl-adenylates (-COAMP), then the persulfide sulfur on the catalytic cysteine is transferred to URM1 and MOCS2A to form thiocarboxylation (-COSH) of their C-terminus. The reaction probably involves hydrogen sulfide that is generated from the persulfide intermediate and that acts as a nucleophile towards URM1 and MOCS2A. Subsequently, a transient disulfide bond is formed. Does not use thiosulfate as sulfur donor; NFS1 probably acting as a sulfur donor for thiocarboxylation reactions. The protein is Adenylyltransferase and sulfurtransferase MOCS3-1 of Drosophila pseudoobscura pseudoobscura (Fruit fly).